The following is a 304-amino-acid chain: Acetyl-coenzyme A carboxylase carboxyl transferase subunit beta (304 aa).

Residues 25–294 form the CoA carboxyltransferase N-terminal domain; it reads VWTKCDSCGQ…PSVVESKADT (270 aa). Residues cysteine 29, cysteine 32, cysteine 48, and cysteine 51 each contribute to the Zn(2+) site. Residues 29 to 51 form a C4-type zinc finger; the sequence is CDSCGQVLYRAELERNLEVCPKC.

This sequence belongs to the AccD/PCCB family. Acetyl-CoA carboxylase is a heterohexamer composed of biotin carboxyl carrier protein (AccB), biotin carboxylase (AccC) and two subunits each of ACCase subunit alpha (AccA) and ACCase subunit beta (AccD). Zn(2+) serves as cofactor.

The protein localises to the cytoplasm. The enzyme catalyses N(6)-carboxybiotinyl-L-lysyl-[protein] + acetyl-CoA = N(6)-biotinyl-L-lysyl-[protein] + malonyl-CoA. Its pathway is lipid metabolism; malonyl-CoA biosynthesis; malonyl-CoA from acetyl-CoA: step 1/1. In terms of biological role, component of the acetyl coenzyme A carboxylase (ACC) complex. Biotin carboxylase (BC) catalyzes the carboxylation of biotin on its carrier protein (BCCP) and then the CO(2) group is transferred by the transcarboxylase to acetyl-CoA to form malonyl-CoA. This is Acetyl-coenzyme A carboxylase carboxyl transferase subunit beta from Yersinia pestis bv. Antiqua (strain Nepal516).